Here is a 497-residue protein sequence, read N- to C-terminus: Lysine--tRNA ligase (497 aa).

Glu405 and Glu412 together coordinate Mg(2+).

Belongs to the class-II aminoacyl-tRNA synthetase family. In terms of assembly, homodimer. Mg(2+) is required as a cofactor.

It localises to the cytoplasm. It carries out the reaction tRNA(Lys) + L-lysine + ATP = L-lysyl-tRNA(Lys) + AMP + diphosphate. The polypeptide is Lysine--tRNA ligase (Gloeobacter violaceus (strain ATCC 29082 / PCC 7421)).